Here is a 300-residue protein sequence, read N- to C-terminus: MLDSLLAIGGLVLLRDSVEWEGRSLLKALIKKSALRGEQVHVLGCEVSEEEFREGFDSDVNSRLVYHDLFRDPLNWSKPGEAVPEGPLKALRSMCKRTDHGSVTIALDSLSWLLCHIPCVTLCQALHALSQQNGDPGDNSLVEQVRVLGLLHEELHGPGSMGALNTLAHTEVTLSGKVDQTSASILCRRPQQRATYQTWWFSVLPDFSLTLHEGLPLRSELHPDHHTTQVDPTAHLTFNLHLSKKEREARDSLTLPFQFSSEKQKALLHPVPSRTTGHIFYEPDAFDDVDPEDPDDDLDI.

Ser-252 carries the phosphoserine modification. Residues 279–300 form a disordered region; the sequence is IFYEPDAFDDVDPEDPDDDLDI. The segment covering 284 to 300 has biased composition (acidic residues); sequence DAFDDVDPEDPDDDLDI.

The protein belongs to the ELP5 family. As to quaternary structure, component of the elongator complex which consists of ELP1, ELP2, ELP3, ELP4, ELP5 and ELP6; in the complex, is required for optimal binding of ELP3 to ELP4. Tyrosine-phosphorylated. As to expression, widely expressed with highest levels in testis. Expressed throughout the cerebellum.

The protein localises to the nucleus. It localises to the cytoplasm. The protein operates within tRNA modification; 5-methoxycarbonylmethyl-2-thiouridine-tRNA biosynthesis. Component of the elongator complex which is required for multiple tRNA modifications, including mcm5U (5-methoxycarbonylmethyl uridine), mcm5s2U (5-methoxycarbonylmethyl-2-thiouridine), and ncm5U (5-carbamoylmethyl uridine). The elongator complex catalyzes the formation of carboxymethyluridine in the wobble base at position 34 in tRNAs. Involved in cell migration. In Mus musculus (Mouse), this protein is Elongator complex protein 5 (Elp5).